Here is a 211-residue protein sequence, read N- to C-terminus: Uracil phosphoribosyltransferase (211 aa).

5-phospho-alpha-D-ribose 1-diphosphate is bound by residues arginine 78, arginine 103, and 130–138; that span reads DPMLATGSS. Uracil contacts are provided by residues isoleucine 193 and 198-200; that span reads GDA. Aspartate 199 contacts 5-phospho-alpha-D-ribose 1-diphosphate.

This sequence belongs to the UPRTase family. It depends on Mg(2+) as a cofactor.

It carries out the reaction UMP + diphosphate = 5-phospho-alpha-D-ribose 1-diphosphate + uracil. It participates in pyrimidine metabolism; UMP biosynthesis via salvage pathway; UMP from uracil: step 1/1. With respect to regulation, allosterically activated by GTP. Its function is as follows. Catalyzes the conversion of uracil and 5-phospho-alpha-D-ribose 1-diphosphate (PRPP) to UMP and diphosphate. This chain is Uracil phosphoribosyltransferase, found in Acinetobacter baylyi (strain ATCC 33305 / BD413 / ADP1).